The sequence spans 442 residues: L-seryl-tRNA(Sec) selenium transferase (442 aa).

At Lys284 the chain carries N6-(pyridoxal phosphate)lysine.

It belongs to the SelA family. Requires pyridoxal 5'-phosphate as cofactor.

The protein localises to the cytoplasm. It carries out the reaction L-seryl-tRNA(Sec) + selenophosphate + H(+) = L-selenocysteinyl-tRNA(Sec) + phosphate. Its pathway is aminoacyl-tRNA biosynthesis; selenocysteinyl-tRNA(Sec) biosynthesis; selenocysteinyl-tRNA(Sec) from L-seryl-tRNA(Sec) (bacterial route): step 1/1. Functionally, converts seryl-tRNA(Sec) to selenocysteinyl-tRNA(Sec) required for selenoprotein biosynthesis. The polypeptide is L-seryl-tRNA(Sec) selenium transferase (Campylobacter fetus subsp. fetus (strain 82-40)).